Reading from the N-terminus, the 271-residue chain is Murein DD-endopeptidase MepH (271 aa).

Positions methionine 1–alanine 27 are cleaved as a signal peptide. A disordered region spans residues alanine 27–alanine 102. The segment covering lysine 55 to alanine 64 has biased composition (basic residues). The span at serine 65–lysine 86 shows a compositional bias: low complexity. Positions glutamine 138–methionine 265 constitute a NlpC/P60 domain. Cysteine 169 serves as the catalytic Nucleophile. Histidine 224 acts as the Proton acceptor in catalysis. Residue glutamine 236 is part of the active site.

The protein belongs to the peptidase C40 family.

Its pathway is cell wall biogenesis; cell wall polysaccharide biosynthesis. A murein DD-endopeptidase with specificity for D-Ala-meso-diaminopimelic acid (mDAP) cross-links. Its role is probably to cleave D-Ala-mDAP cross-links to allow insertion of new glycans and thus cell wall expansion. Functionally redundant with MepM and MepH. Partially suppresses an mepS disruption mutant. The chain is Murein DD-endopeptidase MepH (mepH) from Escherichia coli (strain K12).